The chain runs to 593 residues: Aspartate--tRNA ligase (593 aa).

Glutamate 181 lines the L-aspartate pocket. The segment at 205–208 (QLYK) is aspartate. An L-aspartate-binding site is contributed by arginine 227. Residues 227–229 (RDE) and glutamine 236 each bind ATP. Histidine 455 is a binding site for L-aspartate. Position 489 (glutamate 489) interacts with ATP. Residue arginine 496 coordinates L-aspartate. ATP is bound at residue 541–544 (GLDR).

Belongs to the class-II aminoacyl-tRNA synthetase family. Type 1 subfamily. As to quaternary structure, homodimer.

The protein localises to the cytoplasm. It catalyses the reaction tRNA(Asp) + L-aspartate + ATP = L-aspartyl-tRNA(Asp) + AMP + diphosphate. Catalyzes the attachment of L-aspartate to tRNA(Asp) in a two-step reaction: L-aspartate is first activated by ATP to form Asp-AMP and then transferred to the acceptor end of tRNA(Asp). In Ruminiclostridium cellulolyticum (strain ATCC 35319 / DSM 5812 / JCM 6584 / H10) (Clostridium cellulolyticum), this protein is Aspartate--tRNA ligase.